The primary structure comprises 333 residues: Fructose-1,6-bisphosphatase class 1 (333 aa).

Positions 90, 112, 114, and 115 each coordinate Mg(2+). Substrate contacts are provided by residues 115 to 118 (DGSS), asparagine 207, and lysine 273. Glutamate 279 provides a ligand contact to Mg(2+).

Belongs to the FBPase class 1 family. As to quaternary structure, homotetramer. The cofactor is Mg(2+).

It localises to the cytoplasm. The catalysed reaction is beta-D-fructose 1,6-bisphosphate + H2O = beta-D-fructose 6-phosphate + phosphate. The protein operates within carbohydrate biosynthesis; gluconeogenesis. This Azoarcus sp. (strain BH72) protein is Fructose-1,6-bisphosphatase class 1.